A 202-amino-acid chain; its full sequence is Holliday junction branch migration complex subunit RuvA (202 aa).

A domain I region spans residues 1-64 (MFAYIRGRLE…EDVISLYGFL (64 aa)). A domain II region spans residues 65 to 143 (TQEELNVFEL…KEQLTEYAQS (79 aa)). The tract at residues 144–152 (EEGGKVLDT) is flexible linker. Residues 152-202 (TDSSKMAEAVSALMVLGYSPAEANKAVSAVYREDMDIETIIKNALKGLARP) are domain III.

It belongs to the RuvA family. Homotetramer. Forms an RuvA(8)-RuvB(12)-Holliday junction (HJ) complex. HJ DNA is sandwiched between 2 RuvA tetramers; dsDNA enters through RuvA and exits via RuvB. An RuvB hexamer assembles on each DNA strand where it exits the tetramer. Each RuvB hexamer is contacted by two RuvA subunits (via domain III) on 2 adjacent RuvB subunits; this complex drives branch migration. In the full resolvosome a probable DNA-RuvA(4)-RuvB(12)-RuvC(2) complex forms which resolves the HJ.

Its subcellular location is the cytoplasm. Functionally, the RuvA-RuvB-RuvC complex processes Holliday junction (HJ) DNA during genetic recombination and DNA repair, while the RuvA-RuvB complex plays an important role in the rescue of blocked DNA replication forks via replication fork reversal (RFR). RuvA specifically binds to HJ cruciform DNA, conferring on it an open structure. The RuvB hexamer acts as an ATP-dependent pump, pulling dsDNA into and through the RuvAB complex. HJ branch migration allows RuvC to scan DNA until it finds its consensus sequence, where it cleaves and resolves the cruciform DNA. In Acetivibrio thermocellus (strain ATCC 27405 / DSM 1237 / JCM 9322 / NBRC 103400 / NCIMB 10682 / NRRL B-4536 / VPI 7372) (Clostridium thermocellum), this protein is Holliday junction branch migration complex subunit RuvA.